The sequence spans 356 residues: Fructose-1,6-bisphosphatase class 1 1 (356 aa).

Glu-106, Asp-129, Leu-131, and Asp-132 together coordinate Mg(2+). Substrate-binding positions include 132–135 (DGSS), Asn-225, Tyr-258, and Lys-288. Residue Glu-294 coordinates Mg(2+).

The protein belongs to the FBPase class 1 family. As to quaternary structure, homotetramer. It depends on Mg(2+) as a cofactor.

Its subcellular location is the cytoplasm. The enzyme catalyses beta-D-fructose 1,6-bisphosphate + H2O = beta-D-fructose 6-phosphate + phosphate. Its pathway is carbohydrate biosynthesis; gluconeogenesis. This chain is Fructose-1,6-bisphosphatase class 1 1, found in Salinibacter ruber (strain DSM 13855 / M31).